The chain runs to 105 residues: Met repressor (105 aa).

Belongs to the MetJ family. As to quaternary structure, homodimer.

The protein localises to the cytoplasm. This regulatory protein, when combined with SAM (S-adenosylmethionine) represses the expression of the methionine regulon and of enzymes involved in SAM synthesis. The protein is Met repressor of Actinobacillus succinogenes (strain ATCC 55618 / DSM 22257 / CCUG 43843 / 130Z).